A 66-amino-acid polypeptide reads, in one-letter code: U1-theraphotoxin-Cg1a 1 (66 aa).

The signal sequence occupies residues 1-21 (MKTSALFVIFGLVLLFCNSFA). A propeptide spanning residues 22–29 (AELKTTGR) is cleaved from the precursor. 3 disulfides stabilise this stretch: Cys-31/Cys-46, Cys-38/Cys-51, and Cys-45/Cys-58. The residue at position 63 (Pro-63) is a Proline amide.

Belongs to the neurotoxin 10 (Hwtx-1) family. 46 (Jztx-7/10/12) subfamily. In terms of tissue distribution, expressed by the venom gland.

The protein localises to the secreted. Probable ion channel inhibitor. This chain is U1-theraphotoxin-Cg1a 1, found in Chilobrachys guangxiensis (Chinese earth tiger tarantula).